The sequence spans 476 residues: Bifunctional protein HldE (476 aa).

Residues 1–319 (MKISLPAFEK…EALSLSHGES (319 aa)) form a ribokinase region. 195–198 (NMSE) lines the ATP pocket. Aspartate 264 is a catalytic residue. The segment at 345–476 (MTNGCFDILH…AIIQNIMANQ (132 aa)) is cytidylyltransferase.

The protein in the N-terminal section; belongs to the carbohydrate kinase PfkB family. This sequence in the C-terminal section; belongs to the cytidylyltransferase family. As to quaternary structure, homodimer.

It catalyses the reaction D-glycero-beta-D-manno-heptose 7-phosphate + ATP = D-glycero-beta-D-manno-heptose 1,7-bisphosphate + ADP + H(+). The catalysed reaction is D-glycero-beta-D-manno-heptose 1-phosphate + ATP + H(+) = ADP-D-glycero-beta-D-manno-heptose + diphosphate. It functions in the pathway nucleotide-sugar biosynthesis; ADP-L-glycero-beta-D-manno-heptose biosynthesis; ADP-L-glycero-beta-D-manno-heptose from D-glycero-beta-D-manno-heptose 7-phosphate: step 1/4. Its pathway is nucleotide-sugar biosynthesis; ADP-L-glycero-beta-D-manno-heptose biosynthesis; ADP-L-glycero-beta-D-manno-heptose from D-glycero-beta-D-manno-heptose 7-phosphate: step 3/4. Functionally, catalyzes the phosphorylation of D-glycero-D-manno-heptose 7-phosphate at the C-1 position to selectively form D-glycero-beta-D-manno-heptose-1,7-bisphosphate. Catalyzes the ADP transfer from ATP to D-glycero-beta-D-manno-heptose 1-phosphate, yielding ADP-D-glycero-beta-D-manno-heptose. The protein is Bifunctional protein HldE of Shewanella pealeana (strain ATCC 700345 / ANG-SQ1).